The primary structure comprises 102 residues: Small ribosomal subunit protein uS10 (102 aa).

The protein belongs to the universal ribosomal protein uS10 family. In terms of assembly, part of the 30S ribosomal subunit.

Functionally, involved in the binding of tRNA to the ribosomes. The sequence is that of Small ribosomal subunit protein uS10 from Clostridium beijerinckii (strain ATCC 51743 / NCIMB 8052) (Clostridium acetobutylicum).